The primary structure comprises 847 residues: Pollen-specific leucine-rich repeat extensin-like protein 2 (847 aa).

Residues 1-20 (MERPFGCFFILLLISYTVVA) form the signal peptide. LRR repeat units follow at residues 45–71 (INKVDPNLKFENDRLKRAYIALQAWKK), 106–130 (LTVVAGVDLNHADIAGHLPPELGLM), 131–153 (TDLALFHINSNRFCGIIPKSLSK), 155–178 (ALMYEFDVSNNRFVGQFPEVSLSW), 179–202 (PSLKFLDLRYNEFEGSLPSEIFDK), 204–224 (LDAIFLNNNRFESVIPGTIGK), 226–248 (KASVVTFANNKFSGCIPKSIGNM), and 249–273 (KNLNEIVFTGNNLTGCFPNEIGLLN). Asn-260 and Asn-274 each carry an N-linked (GlcNAc...) asparagine glycan. 2 LRR repeats span residues 296 to 319 (LASVEQLDLSHNKLTGFVVDKFCK) and 321 to 343 (PNLDSFKFSYNFFNGEAESCVPG). The disordered stretch occupies residues 381-847 (KDKCSGGSNG…SPPPPMFQGY (467 aa)). Residues 438-484 (PKHESPKPEEPENKHELPKQKESPKPQPSKPEDSPKPEQPKPEESPK) are compositionally biased toward basic and acidic residues. Composition is skewed to pro residues over residues 485-499 (PEQPQIPEPTKPVSP) and 533-642 (VPPP…PPPT). A contains the Ser-Pro(4) repeats region spans residues 522-847 (SPPPPKVEDT…SPPPPMFQGY (326 aa)). Polar residues-rich tracts occupy residues 667 to 682 (QVPTPSSESDQSQILS), 688 to 720 (TPVQSSTPSSEPTQVPTPSSSESYQAPNLSPVQ), and 726 to 752 (QAPTTSSETSQVPTPSSESNQSPSQAP). Composition is skewed to low complexity over residues 768–783 (PVQSPTPSSEPVSSPE) and 797–811 (NPSSVPSSSPSTDTS). Positions 838–847 (SPPPPMFQGY) are enriched in pro residues.

In terms of processing, hydroxylated on proline residues in the S-P-P-P-P repeat. O-glycosylated on hydroxyprolines. In terms of tissue distribution, expressed in flowers, stamen, pollen, and pollinated carpels (at protein level).

It is found in the secreted. The protein localises to the cell wall. Modulates cell morphogenesis by regulating cell wall formation and assembly, and/or growth polarization. The chain is Pollen-specific leucine-rich repeat extensin-like protein 2 (PEX2) from Arabidopsis thaliana (Mouse-ear cress).